We begin with the raw amino-acid sequence, 370 residues long: tRNA/tmRNA (uracil-C(5))-methyltransferase (370 aa).

The S-adenosyl-L-methionine site is built by Gln190, Tyr218, Asn223, Glu239, and Asp299. Cys324 functions as the Nucleophile in the catalytic mechanism. Glu358 acts as the Proton acceptor in catalysis.

The protein belongs to the class I-like SAM-binding methyltransferase superfamily. RNA M5U methyltransferase family. TrmA subfamily.

It catalyses the reaction uridine(54) in tRNA + S-adenosyl-L-methionine = 5-methyluridine(54) in tRNA + S-adenosyl-L-homocysteine + H(+). The catalysed reaction is uridine(341) in tmRNA + S-adenosyl-L-methionine = 5-methyluridine(341) in tmRNA + S-adenosyl-L-homocysteine + H(+). Functionally, dual-specificity methyltransferase that catalyzes the formation of 5-methyluridine at position 54 (m5U54) in all tRNAs, and that of position 341 (m5U341) in tmRNA (transfer-mRNA). The sequence is that of tRNA/tmRNA (uracil-C(5))-methyltransferase from Sodalis glossinidius (strain morsitans).